We begin with the raw amino-acid sequence, 507 residues long: ATP synthase subunit alpha, chloroplastic (507 aa).

ATP is bound at residue 170–177 (GDRQTGKT).

The protein belongs to the ATPase alpha/beta chains family. In terms of assembly, F-type ATPases have 2 components, CF(1) - the catalytic core - and CF(0) - the membrane proton channel. CF(1) has five subunits: alpha(3), beta(3), gamma(1), delta(1), epsilon(1). CF(0) has four main subunits: a, b, b' and c.

The protein localises to the plastid. Its subcellular location is the chloroplast thylakoid membrane. The enzyme catalyses ATP + H2O + 4 H(+)(in) = ADP + phosphate + 5 H(+)(out). Its function is as follows. Produces ATP from ADP in the presence of a proton gradient across the membrane. The alpha chain is a regulatory subunit. This is ATP synthase subunit alpha, chloroplastic from Gossypium hirsutum (Upland cotton).